The sequence spans 124 residues: Small ribosomal subunit protein uS11 (124 aa).

The disordered stretch occupies residues 102–124 (RIGRIEDATPIPHDGTTPKRKNR).

The protein belongs to the universal ribosomal protein uS11 family. In terms of assembly, part of the 30S ribosomal subunit.

In terms of biological role, located on the platform of the 30S subunit. The sequence is that of Small ribosomal subunit protein uS11 from Methanococcus maripaludis (strain C5 / ATCC BAA-1333).